Reading from the N-terminus, the 609-residue chain is Acetyl-coenzyme A carboxylase carboxyl transferase subunits beta/alpha (609 aa).

The interval 1-271 (MTLEATAIEA…QTAEFLLTHG (271 aa)) is acetyl-coenzyme A carboxylase carboxyl transferase subunit beta. In terms of domain architecture, CoA carboxyltransferase N-terminal spans 39-308 (SWLLCGGCGT…GIPRQAGRPD (270 aa)). A carboxyltransferase region spans residues 39-559 (SWLLCGGCGT…REALRGALAD (521 aa)). Cys43, Cys46, Cys62, and Cys65 together coordinate Zn(2+). A C4-type zinc finger spans residues 43–65 (CGGCGTMLYERRFAREGRVCADC). An acetyl-coenzyme A carboxylase carboxyl transferase subunit alpha region spans residues 272-582 (VVDLISPRRE…RARFRQFGVA (311 aa)). Positions 314-559 (DPEQLARRDA…REALRGALAD (246 aa)) constitute a CoA carboxyltransferase C-terminal domain. Residues 582–592 (ATPAPATAPAA) are compositionally biased toward low complexity. The disordered stretch occupies residues 582–609 (ATPAPATAPAASDDAHESQTDRSVEATR). Basic and acidic residues predominate over residues 594–609 (DDAHESQTDRSVEATR).

In the N-terminal section; belongs to the AccD/PCCB family. It in the C-terminal section; belongs to the AccA family. As to quaternary structure, acetyl-CoA carboxylase is a heterotetramer composed of biotin carboxyl carrier protein (AccB), biotin carboxylase (AccC) and two subunits of ACCase subunit beta/alpha. The cofactor is Zn(2+).

It is found in the cytoplasm. The enzyme catalyses N(6)-carboxybiotinyl-L-lysyl-[protein] + acetyl-CoA = N(6)-biotinyl-L-lysyl-[protein] + malonyl-CoA. The protein operates within lipid metabolism; malonyl-CoA biosynthesis; malonyl-CoA from acetyl-CoA: step 1/1. Functionally, component of the acetyl coenzyme A carboxylase (ACC) complex. Biotin carboxylase (BC) catalyzes the carboxylation of biotin on its carrier protein (BCCP) and then the CO(2) group is transferred by the transcarboxylase to acetyl-CoA to form malonyl-CoA. This chain is Acetyl-coenzyme A carboxylase carboxyl transferase subunits beta/alpha (accD), found in Frankia alni (strain DSM 45986 / CECT 9034 / ACN14a).